A 269-amino-acid chain; its full sequence is Indole-3-glycerol phosphate synthase (269 aa).

It belongs to the TrpC family.

It carries out the reaction 1-(2-carboxyphenylamino)-1-deoxy-D-ribulose 5-phosphate + H(+) = (1S,2R)-1-C-(indol-3-yl)glycerol 3-phosphate + CO2 + H2O. It functions in the pathway amino-acid biosynthesis; L-tryptophan biosynthesis; L-tryptophan from chorismate: step 4/5. The chain is Indole-3-glycerol phosphate synthase from Rhodococcus jostii (strain RHA1).